The chain runs to 666 residues: tRNA 5-methylaminomethyl-2-thiouridine biosynthesis bifunctional protein MnmC (666 aa).

Residues 1–253 (MSSPFVPIIT…KRHMICAHYE (253 aa)) form a tRNA (mnm(5)s(2)U34)-methyltransferase region. The tract at residues 283 to 666 (VGGGLAGCFI…FLRKKIIQGP (384 aa)) is FAD-dependent cmnm(5)s(2)U34 oxidoreductase.

It in the N-terminal section; belongs to the methyltransferase superfamily. tRNA (mnm(5)s(2)U34)-methyltransferase family. This sequence in the C-terminal section; belongs to the DAO family. The cofactor is FAD.

The protein localises to the cytoplasm. The catalysed reaction is 5-aminomethyl-2-thiouridine(34) in tRNA + S-adenosyl-L-methionine = 5-methylaminomethyl-2-thiouridine(34) in tRNA + S-adenosyl-L-homocysteine + H(+). Catalyzes the last two steps in the biosynthesis of 5-methylaminomethyl-2-thiouridine (mnm(5)s(2)U) at the wobble position (U34) in tRNA. Catalyzes the FAD-dependent demodification of cmnm(5)s(2)U34 to nm(5)s(2)U34, followed by the transfer of a methyl group from S-adenosyl-L-methionine to nm(5)s(2)U34, to form mnm(5)s(2)U34. The polypeptide is tRNA 5-methylaminomethyl-2-thiouridine biosynthesis bifunctional protein MnmC (Legionella pneumophila subsp. pneumophila (strain Philadelphia 1 / ATCC 33152 / DSM 7513)).